The chain runs to 322 residues: tRNA-dihydrouridine(16) synthase (322 aa).

FMN-binding positions include 7 to 9 (PME) and Q68. Catalysis depends on C98, which acts as the Proton donor. Residues K139, 200 to 202 (NGE), and 224 to 225 (CR) contribute to the FMN site.

Belongs to the Dus family. DusC subfamily. FMN serves as cofactor.

The enzyme catalyses 5,6-dihydrouridine(16) in tRNA + NADP(+) = uridine(16) in tRNA + NADPH + H(+). It catalyses the reaction 5,6-dihydrouridine(16) in tRNA + NAD(+) = uridine(16) in tRNA + NADH + H(+). Functionally, catalyzes the synthesis of 5,6-dihydrouridine (D), a modified base found in the D-loop of most tRNAs, via the reduction of the C5-C6 double bond in target uridines. Specifically modifies U16 in tRNAs. This is tRNA-dihydrouridine(16) synthase from Vibrio parahaemolyticus serotype O3:K6 (strain RIMD 2210633).